The sequence spans 210 residues: MAATLGILGRKLGMTRVFGDDGSIIPVTVIQAGPCPVTQVKNLEKDGYNAMQIGFDEIPERKVNKPEKGHLDKAARGYFRVLKEIRLDGPVPFEQGMDVTVDIFAPGEIVKVTGTSIGKGFAGVMKRWNFAGLKKTHGTEKAHRSGGSIGNNTEPGKVMKGKKMAGHMGARTVTVPSITVVDVRPEMNLILVKGQIPGPRNGVVVVRKQG.

Residues 136 to 156 are disordered; it reads THGTEKAHRSGGSIGNNTEPG.

This sequence belongs to the universal ribosomal protein uL3 family. In terms of assembly, part of the 50S ribosomal subunit. Forms a cluster with proteins L14 and L19.

Functionally, one of the primary rRNA binding proteins, it binds directly near the 3'-end of the 23S rRNA, where it nucleates assembly of the 50S subunit. This chain is Large ribosomal subunit protein uL3, found in Solidesulfovibrio magneticus (strain ATCC 700980 / DSM 13731 / RS-1) (Desulfovibrio magneticus).